The following is a 146-amino-acid chain: UPF0260 protein Ssed_2516 (146 aa).

Belongs to the UPF0260 family.

This is UPF0260 protein Ssed_2516 from Shewanella sediminis (strain HAW-EB3).